The following is a 630-amino-acid chain: MACLLRVALNPTFERSTVASQRQNPKTILSFHCKVSSFKTKTMSQSFAPREKLMRKCREKKEAEREAEREAEREAEEEEKAEEAEAEADKEEAEEESEEEEEEEEEEAEAEEEALGGDIEDLFSENETQKIRMGLLDWYDVNKRDLPWRNRRSESEKERRAYEVWVSEIMLQQTRVQTVMKYYKRWMQKWPTIYDLGQASLENLIVSRSRELSFLRGNEKKEVNEMWAGLGYYRRARFLLEGAKMVVAGTEGFPNQASSLMKVKGIGQYTAGAIASIAFNEAVPVVDGNVIRVLARLKAISANPKDRLTARNFWKLAAQLVDPSRPGDFNQSLMELGATLCTVSKPSCSSCPVSSQCRAFSLSEENRTISVTDYPTKVIKAKPRHDFCCVCVLEIHNLERNQSGGRFVLVKRPEQGLLAGLWEFPSVILNEEADSATRRNAINVYLKEAFRFHVELKKACTIVSREELGEFVHIFTHIRRKVYVELLVVQLTGGTEDLFKGQAKDTLTWKCVSSDVLSTLGLTSAVRKVPPFRLQHIKRLSLDVMVEKEQILECRCIQWLKHTSKAYLFLMSHQIEQPYRGNENSHDLLLTLFFMLLSFYSSCLALGIKFGDLGLKLNSLVSTEKSDGDV.

A compositionally biased stretch (basic and acidic residues) spans 54–72; sequence MRKCREKKEAEREAEREAE. The segment at 54–123 is disordered; that stretch reads MRKCREKKEA…ALGGDIEDLF (70 aa). The segment covering 73 to 123 has biased composition (acidic residues); it reads REAEEEEKAEEAEAEADKEEAEEESEEEEEEEEEEAEAEEEALGGDIEDLF. Glutamate 168 serves as the catalytic Proton donor/acceptor. Positions 341, 348, 351, and 357 each coordinate [4Fe-4S] cluster. Positions 383 to 536 constitute a Nudix hydrolase domain; it reads PRHDFCCVCV…RKVPPFRLQH (154 aa). The Nudix box motif lies at 427 to 451; the sequence is VILNEEADSATRRNAINVYLKEAFR.

The protein belongs to the Nth/MutY family. [4Fe-4S] cluster serves as cofactor.

Its subcellular location is the nucleus. It catalyses the reaction Hydrolyzes free adenine bases from 7,8-dihydro-8-oxoguanine:adenine mismatched double-stranded DNA, leaving an apurinic site.. Functionally, involved in oxidative DNA damage repair. Initiates repair of A*oxoG to C*G by removing the inappropriately paired adenine base from the DNA backbone. Possesses both adenine and 2-OH-A DNA glycosylase activities. The protein is Adenine DNA glycosylase (MYH) of Arabidopsis thaliana (Mouse-ear cress).